We begin with the raw amino-acid sequence, 610 residues long: ESX-5 secretion system protein EccA5 (610 aa).

Position 357–364 (357–364 (GPPGTGKT)) interacts with ATP.

It belongs to the CbxX/CfxQ family. Part of the ESX-5 / type VII secretion system (T7SS), which is composed of cytosolic and membrane components.

It localises to the cytoplasm. Part of the ESX-5 specialized secretion system, which is responsible for the secretion of EsxN and a number of PE_PGRS and PPE proteins. EccA5 exhibits ATPase activity and may provide energy for the export of ESX-5 substrates. This chain is ESX-5 secretion system protein EccA5, found in Mycobacterium marinum (strain ATCC BAA-535 / M).